The sequence spans 290 residues: Bifunctional protein FolD 3 (290 aa).

NADP(+)-binding positions include 163-165 (GHS) and Ile229.

This sequence belongs to the tetrahydrofolate dehydrogenase/cyclohydrolase family. As to quaternary structure, homodimer.

The catalysed reaction is (6R)-5,10-methylene-5,6,7,8-tetrahydrofolate + NADP(+) = (6R)-5,10-methenyltetrahydrofolate + NADPH. It carries out the reaction (6R)-5,10-methenyltetrahydrofolate + H2O = (6R)-10-formyltetrahydrofolate + H(+). The protein operates within one-carbon metabolism; tetrahydrofolate interconversion. Its function is as follows. Catalyzes the oxidation of 5,10-methylenetetrahydrofolate to 5,10-methenyltetrahydrofolate and then the hydrolysis of 5,10-methenyltetrahydrofolate to 10-formyltetrahydrofolate. The sequence is that of Bifunctional protein FolD 3 from Roseobacter denitrificans (strain ATCC 33942 / OCh 114) (Erythrobacter sp. (strain OCh 114)).